Consider the following 889-residue polypeptide: Oxysterol-binding protein-related protein 8 (889 aa).

The residue at position 1 (methionine 1) is an N-acetylmethionine. A disordered region spans residues 1 to 129 (MEAALADGEP…SLKVQKKNYR (129 aa)). 3 positions are modified to phosphoserine: serine 14, serine 65, and serine 68. The span at 62 to 71 (PSLSPASLHS) shows a compositional bias: polar residues. Composition is skewed to basic and acidic residues over residues 73–88 (GFER…KDDS), 95–109 (SKSE…EKDS), and 116–129 (TKKE…KNYR). Residues 148 to 265 (VIVMADWLKI…WMDALELALK (118 aa)) form the PH domain. A phosphoserine mark is found at serine 314, serine 328, and serine 342. Basic and acidic residues predominate over residues 321–336 (FKDQDLYSDKSDKEND). The segment at 321 to 374 (FKDQDLYSDKSDKENDPEHDESDNEVLGKSEESDTDTSERQDDSYIDPEPVEPL) is disordered. The segment covering 346–363 (VLGKSEESDTDTSERQDD) has biased composition (basic and acidic residues). A 1,2-diacyl-sn-glycero-3-phospho-(1D-myo-inositol 4-phosphate) contacts are provided by residues 420 to 425 (LSRVVL), 482 to 485 (KPYN), and 514 to 515 (HH). A 1,2-diacyl-sn-glycero-3-phospho-L-serine-binding positions include 420–425 (LSRVVL) and asparagine 485. A 1,2-diacyl-sn-glycero-3-phospho-L-serine is bound at residue serine 540. 3 residues coordinate a 1,2-diacyl-sn-glycero-3-phospho-(1D-myo-inositol 4-phosphate): lysine 706, glutamate 710, and arginine 714. The tract at residues 772–823 (HRTPMVSVPKMKHKPTRQQKKVVKGYSSPEPDIQDSSGSEAQSVKPSTRRKK) is disordered. The span at 781 to 794 (KMKHKPTRQQKKVV) shows a compositional bias: basic residues. A compositionally biased stretch (polar residues) spans 805–817 (QDSSGSEAQSVKP). Serine 807, serine 808, serine 810, and serine 814 each carry phosphoserine. The chain crosses the membrane as a helical span at residues 871–888 (YFVIFLLILLQVIINFIF).

Belongs to the OSBP family. In terms of assembly, interacts with SPAG5. Interacts with NUP62. As to expression, widely expressed. Most abundant in liver, spleen, kidney, brain and adipose tissue.

The protein resides in the endoplasmic reticulum membrane. It is found in the nucleus membrane. Its function is as follows. Lipid transporter involved in lipid countertransport between the endoplasmic reticulum and the plasma membrane: specifically exchanges phosphatidylserine with phosphatidylinositol 4-phosphate (PI4P), delivering phosphatidylserine to the plasma membrane in exchange for PI4P, which is degraded by the SAC1/SACM1L phosphatase in the endoplasmic reticulum. Binds phosphatidylserine and PI4P in a mutually exclusive manner. Binds oxysterol, 25-hydroxycholesterol and cholesterol. The protein is Oxysterol-binding protein-related protein 8 of Mus musculus (Mouse).